The chain runs to 265 residues: C-type lectin domain family 12 member A (265 aa).

Residues 1–43 (MSEEVTYADLQFQNSSEMEKIPEIGKFGEKAPPAPSHVWRPAA) are Cytoplasmic-facing. Positions 5–10 (VTYADL) match the ITIM motif motif. Tyrosine 7 is subject to Phosphotyrosine. The helical; Signal-anchor for type II membrane protein transmembrane segment at 44–64 (LFLTLLCLLLLIGLGVLASMF) threads the bilayer. Over 65–265 (HVTLKIEMKK…QLGSTYFREA (201 aa)) the chain is Extracellular. Asparagine 88 and asparagine 98 each carry an N-linked (GlcNAc...) asparagine glycan. 4 cysteine pairs are disulfide-bonded: cysteine 118–cysteine 130, cysteine 133–cysteine 144, cysteine 161–cysteine 248, and cysteine 227–cysteine 240. Residues 140 to 249 (HKDSCYFLSD…CTYKKRMICE (110 aa)) enclose the C-type lectin domain. The N-linked (GlcNAc...) asparagine glycan is linked to asparagine 165.

In terms of assembly, homodimer; disulfide-linked. Interacts (when the ITIM motif is phosphorylated) with PTPN6 and PTPN11. Post-translationally, phosphorylated at Tyr-7 by SRC in the ITIM motif following ligand-binding, promoting recruitment of tyrosine-protein phosphatases PTPN6 and PTPN11. Highly N-glycosylated; glycosylation varies between cell types. Preferentially expressed in lymphoid tissues and immune cells, including natural killer (NK) cells, T-cells, dendritic cells and monocytes or macrophages. Detected in spleen macrophage-rich red pulp and in lymph node (at protein level). Detected in peripheral blood leukocytes, dendritic cells, bone marrow, monocytes, mononuclear leukocytes and macrophages.

It localises to the cell membrane. Myeloid inhibitory C-type lectin receptor that acts as a negative regulator of myeloid cell activation. Myeloid cell inhibition is required to limit proinflammatory pathways and protect against excessive inflammation. Specifically recognizes and binds various structures, such as neutrophil extracellular traps (NETs) or monosodium urate crystals. Also acts as a pattern-recognition receptor for pathogen-associated molecules, such as plasmodium hemozoin or mycobacterial micolic acid. Ligand-binding induces phosphorylation of its ITIM motif, followed by recruitment of tyrosine-protein phosphatases PTPN6 and PTPN11, which counteract tyrosine-protein kinase SYK, thereby preventing myeloid cell activation. Acts as a pattern-recognition receptor for NETs in neutrophils: specifically recognizes DNA in NETs, leading to inhibit neutrophil activation and limit further NET formation. This regulation is essential for controlling key neutrophil responses and limit NET-mediated inflammatory conditions. Also recognizes dead cells by acting as a receptor for monosodium urate crystals, leading to down-regulate neutrophil activation. Binding to monosodium urate crystals also promotes the type I interferon response. Acts as an inhibitor of natural killer (NK) cell cytotoxicity. Also acts as an ihibitor of dendritic cell maturation in an IL10-dependent manner. The polypeptide is C-type lectin domain family 12 member A (Homo sapiens (Human)).